A 424-amino-acid polypeptide reads, in one-letter code: Histidine--tRNA ligase (424 aa).

It belongs to the class-II aminoacyl-tRNA synthetase family. As to quaternary structure, homodimer.

Its subcellular location is the cytoplasm. It carries out the reaction tRNA(His) + L-histidine + ATP = L-histidyl-tRNA(His) + AMP + diphosphate + H(+). The polypeptide is Histidine--tRNA ligase (Pectobacterium carotovorum subsp. carotovorum (strain PC1)).